Reading from the N-terminus, the 125-residue chain is uncharacterized protein (125 aa).

Residues 10–26 (IIILVCLMFLAIMVYIY) form a helical membrane-spanning segment.

The protein localises to the membrane. This is an uncharacterized protein from Rickettsia prowazekii (strain Madrid E).